Reading from the N-terminus, the 530-residue chain is 6-phosphofructo-2-kinase/fructose-2,6-bisphosphatase 2 (530 aa).

Over residues 1–15 (MSGASSSEQNNNSYE) the composition is skewed to polar residues. The interval 1–21 (MSGASSSEQNNNSYETKPPNL) is disordered. Residue serine 2 is modified to N-acetylserine. The interval 2–248 (SGASSSEQNN…VYYLMNIHVQ (247 aa)) is 6-phosphofructo-2-kinase. The residue at position 29 (serine 29) is a Phosphoserine; by PKA. 45-53 (GLPARGKTY) is a binding site for ATP. Arginine 78 and arginine 102 together coordinate beta-D-fructose 6-phosphate. Aspartate 128 is an active-site residue. 2 residues coordinate beta-D-fructose 6-phosphate: threonine 130 and arginine 136. Cysteine 158 is an active-site residue. 167–172 (NILEVK) contacts ATP. Lysine 172, arginine 193, and tyrosine 197 together coordinate beta-D-fructose 6-phosphate. The fructose-2,6-bisphosphatase stretch occupies residues 249 to 530 (PRTIYLCRHG…PPALASCPCH (282 aa)). Residue arginine 256 coordinates beta-D-fructose 2,6-bisphosphate. Catalysis depends on histidine 257, which acts as the Tele-phosphohistidine intermediate. Glycine 269 is a binding site for beta-D-fructose 2,6-bisphosphate. The Proton donor/acceptor role is filled by glutamate 326. Tyrosine 337, arginine 351, lysine 355, tyrosine 366, glutamine 392, and arginine 396 together coordinate beta-D-fructose 2,6-bisphosphate. ATP is bound at residue 348–351 (FALR). Residues 392-396 (QAVMR) and tyrosine 428 each bind ATP. Positions 446–512 (RDKPTNNFPK…GPTSRRPKSH (67 aa)) are disordered. A compositionally biased stretch (polar residues) spans 450–476 (TNNFPKNQTPVRMRRNSFTPLSSSNTI). Serine 466 bears the Phosphoserine; by AMPK and PKA mark. Threonine 468 is subject to Phosphothreonine. Threonine 475 bears the Phosphothreonine; by PKC mark. Phosphoserine is present on residues serine 483 and serine 493.

In the C-terminal section; belongs to the phosphoglycerate mutase family. Homodimer. Forms a heterodimer with PFKFB3. Post-translationally, phosphorylation by AMPK stimulates activity.

It carries out the reaction beta-D-fructose 2,6-bisphosphate + H2O = beta-D-fructose 6-phosphate + phosphate. The enzyme catalyses beta-D-fructose 6-phosphate + ATP = beta-D-fructose 2,6-bisphosphate + ADP + H(+). With respect to regulation, phosphorylation results in the activation of the kinase activity. Synthesis and degradation of fructose 2,6-bisphosphate. This Pongo abelii (Sumatran orangutan) protein is 6-phosphofructo-2-kinase/fructose-2,6-bisphosphatase 2 (PFKFB2).